Reading from the N-terminus, the 123-residue chain is Methicillin resistance regulatory protein MecI (123 aa).

Residues 7-71 (EISSAEWEVM…KDNKIFQYYS (65 aa)) constitute a DNA-binding region (H-T-H motif). The interval 74 to 123 (EESDIKYKTSKNFINKVYKGGFNSLVLNFVEKEDLSQDEIEELRNILNKK) is important for dimerization.

It belongs to the BlaI transcriptional regulatory family. In terms of assembly, monomer and homodimer. Post-translationally, upon exposure to beta-lactams, proteolytic cleavage at a single site impairs dimerization and abolishes repressor activity.

The protein resides in the cytoplasm. Its function is as follows. Transcriptional repressor that constitutively blocks the transcription of the gene for the penicillin-binding protein MecA. Binds palindromic DNA with the sequence 5'-TACA-[AT]-N-TGTA-3'. Regulates genes involved in antibiotic resistance. Binds DNA as a dimer. This is Methicillin resistance regulatory protein MecI (mecI) from Staphylococcus aureus (strain N315).